The primary structure comprises 327 residues: Meiotic coiled-coil protein 6 (327 aa).

Residues 66–188 (DAFERDSTQR…TETKEMNKIK (123 aa)) are a coiled coil. A compositionally biased stretch (basic and acidic residues) spans 175 to 199 (RRMETETKEMNKIKPKNDSESDRFK). A disordered region spans residues 175–234 (RRMETETKEMNKIKPKNDSESDRFKRNSQSLSQQSPLLDVHSPDNSNHRTMLNINNSSPI). The span at 202–212 (SQSLSQQSPLL) shows a compositional bias: low complexity. The segment covering 217–232 (PDNSNHRTMLNINNSS) has biased composition (polar residues). A coiled-coil region spans residues 243 to 297 (NEVKNRISRLQKTFADLENQHHSFQQICQTLRKRLENDSSTTKQRLSKLEEIIRN).

In terms of assembly, interacts with alp4, kms1 and mbo1.

Its subcellular location is the nucleus. It localises to the cytoplasm. The protein localises to the cytoskeleton. The protein resides in the microtubule organizing center. It is found in the spindle pole body. Has a role in meiotic nuclear oscillation and recombination. Required to remodel astral microtubules into the 'horsetail' astral array maintaining the 'horsetail' nuclear movement. Promotes homologous paring of chromosomes during this movement. The chain is Meiotic coiled-coil protein 6 (mcp6) from Schizosaccharomyces pombe (strain 972 / ATCC 24843) (Fission yeast).